Reading from the N-terminus, the 346-residue chain is Annexin A1 (346 aa).

Alanine 2 is subject to N-acetylalanine. At serine 5 the chain carries Phosphoserine; by TRPM7. Glutamine 19 is covalently cross-linked (Isoglutamyl lysine isopeptide (Gln-Lys) (interchain with K-?)). Tyrosine 21 carries the phosphotyrosine; by EGFR modification. Serine 27 bears the Phosphoserine; by PKC mark. Phosphoserine occurs at positions 34 and 37. Position 41 is a phosphothreonine (threonine 41). Annexin repeat units lie at residues phenylalanine 42 to lysine 113, threonine 114 to lysine 185, aspartate 197 to lysine 269, and serine 273 to glycine 344. Lysine 58 is subject to N6-acetyllysine. Glycine 59, valine 60, glutamate 62, lysine 97, leucine 100, glutamate 105, methionine 127, glycine 129, glycine 131, threonine 132, and glutamate 134 together coordinate Ca(2+). Residue threonine 136 is modified to Phosphothreonine. Residues aspartate 171, glycine 210, and arginine 213 each coordinate Ca(2+). Lysine 214 is covalently cross-linked (Glycyl lysine isopeptide (Lys-Gly) (interchain with G-Cter in SUMO1); alternate). A Glycyl lysine isopeptide (Lys-Gly) (interchain with G-Cter in SUMO2); alternate cross-link involves residue lysine 214. Glycine 215 provides a ligand contact to Ca(2+). Lysine 239 bears the N6-acetyllysine mark. Residues aspartate 253, glutamate 255, and leucine 256 each coordinate Ca(2+). Lysine 257 is covalently cross-linked (Glycyl lysine isopeptide (Lys-Gly) (interchain with G-Cter in SUMO1)). Residues glutamate 261, methionine 286, glycine 288, and glycine 290 each contribute to the Ca(2+) site. Lysine 312 carries the N6-acetyllysine modification. A disulfide bond links cysteine 324 and cysteine 343. Ca(2+)-binding residues include leucine 328, glutamate 330, and threonine 331. Lysine 332 is covalently cross-linked (Glycyl lysine isopeptide (Lys-Gly) (interchain with G-Cter in SUMO1)). Glutamate 336 provides a ligand contact to Ca(2+).

This sequence belongs to the annexin family. As to quaternary structure, homodimer; non-covalently linked. Homodimer; linked by transglutamylation. Homodimers linked by transglutamylation are observed in placenta, but not in other tissues. Interacts with S100A11. Heterotetramer, formed by two molecules each of S100A11 and ANXA1. Interacts with DYSF. Interacts with EGFR. Post-translationally, phosphorylated by protein kinase C, EGFR and TRPM7. Phosphorylated in response to EGF treatment. In terms of processing, sumoylated. Proteolytically cleaved by cathepsin CTSG to release the active N-terminal peptide Ac2-26.

Its subcellular location is the nucleus. It localises to the cytoplasm. The protein localises to the cell projection. It is found in the cilium. The protein resides in the basolateral cell membrane. Its subcellular location is the lateral cell membrane. It localises to the cell membrane. The protein localises to the apical cell membrane. It is found in the membrane. The protein resides in the early endosome. Its subcellular location is the cytoplasmic vesicle membrane. It localises to the endosome membrane. The protein localises to the secreted. It is found in the extracellular space. The protein resides in the extracellular exosome. Its subcellular location is the cytoplasmic vesicle. It localises to the secretory vesicle lumen. The protein localises to the phagocytic cup. Its function is as follows. Plays important roles in the innate immune response as effector of glucocorticoid-mediated responses and regulator of the inflammatory process. Has anti-inflammatory activity. Plays a role in glucocorticoid-mediated down-regulation of the early phase of the inflammatory response. Contributes to the adaptive immune response by enhancing signaling cascades that are triggered by T-cell activation, regulates differentiation and proliferation of activated T-cells. Promotes the differentiation of T-cells into Th1 cells and negatively regulates differentiation into Th2 cells. Has no effect on unstimulated T-cells. Negatively regulates hormone exocytosis via activation of the formyl peptide receptors and reorganization of the actin cytoskeleton. Has high affinity for Ca(2+) and can bind up to eight Ca(2+) ions. Displays Ca(2+)-dependent binding to phospholipid membranes. Plays a role in the formation of phagocytic cups and phagosomes. Plays a role in phagocytosis by mediating the Ca(2+)-dependent interaction between phagosomes and the actin cytoskeleton. Functions at least in part by activating the formyl peptide receptors and downstream signaling cascades. Promotes chemotaxis of granulocytes and monocytes via activation of the formyl peptide receptors. Promotes rearrangement of the actin cytoskeleton, cell polarization and cell migration. Promotes resolution of inflammation and wound healing. Acts via neutrophil N-formyl peptide receptors to enhance the release of CXCL2. This chain is Annexin A1 (ANXA1), found in Pan troglodytes (Chimpanzee).